Here is a 230-residue protein sequence, read N- to C-terminus: Urease accessory protein UreF (230 aa).

It belongs to the UreF family. UreD, UreF and UreG form a complex that acts as a GTP-hydrolysis-dependent molecular chaperone, activating the urease apoprotein by helping to assemble the nickel containing metallocenter of UreC. The UreE protein probably delivers the nickel.

It localises to the cytoplasm. Functionally, required for maturation of urease via the functional incorporation of the urease nickel metallocenter. The sequence is that of Urease accessory protein UreF from Chromohalobacter salexigens (strain ATCC BAA-138 / DSM 3043 / CIP 106854 / NCIMB 13768 / 1H11).